We begin with the raw amino-acid sequence, 347 residues long: 4-hydroxy-2-oxovalerate aldolase 1 (347 aa).

Residues 11–263 (VVLHDMCLRD…ETGVDLFKLM (253 aa)) form the Pyruvate carboxyltransferase domain. 19–20 (RD) lines the substrate pocket. Asp20 is a Mn(2+) binding site. Catalysis depends on His23, which acts as the Proton acceptor. Substrate contacts are provided by Ser173 and His202. Residues His202 and His204 each contribute to the Mn(2+) site. Tyr293 serves as a coordination point for substrate.

This sequence belongs to the 4-hydroxy-2-oxovalerate aldolase family.

The enzyme catalyses (S)-4-hydroxy-2-oxopentanoate = acetaldehyde + pyruvate. This Azoarcus sp. (strain BH72) protein is 4-hydroxy-2-oxovalerate aldolase 1 (lapG).